A 1151-amino-acid chain; its full sequence is Semaphorin-5B (1151 aa).

Topologically, residues methionine 1–histidine 1036 are extracellular. One can recognise a Sema domain in the interval histidine 103–leucine 553. Residue asparagine 153 is glycosylated (N-linked (GlcNAc...) asparagine). 2 disulfides stabilise this stretch: cysteine 172-cysteine 182 and cysteine 199-cysteine 208. Residues asparagine 236 and asparagine 345 are each glycosylated (N-linked (GlcNAc...) asparagine). Cystine bridges form between cysteine 322–cysteine 425 and cysteine 346–cysteine 388. An N-linked (GlcNAc...) asparagine glycan is attached at asparagine 436. The PSI domain occupies arginine 555–proline 602. 2 TSP type-1 domains span residues asparagine 664–proline 720 and proline 722–proline 771. Intrachain disulfides connect cysteine 676–cysteine 713, cysteine 680–cysteine 719, cysteine 691–cysteine 703, cysteine 734–cysteine 765, cysteine 738–cysteine 770, and cysteine 749–cysteine 755. An O-linked (GalNAc...) threonine glycan is attached at threonine 788. TSP type-1 domains follow at residues serine 853–proline 908, arginine 910–proline 965, and glutamate 966–proline 1010. 6 disulfide bridges follow: cysteine 865–cysteine 902, cysteine 869–cysteine 907, cysteine 880–cysteine 892, cysteine 922–cysteine 959, cysteine 926–cysteine 964, and cysteine 937–cysteine 949. Residues leucine 1037–leucine 1057 form a helical; Signal-anchor for type III membrane protein membrane-spanning segment. Over serine 1058 to serine 1151 the chain is Cytoplasmic.

Belongs to the semaphorin family.

Its subcellular location is the membrane. Functionally, may act as a positive axonal guidance cue. The protein is Semaphorin-5B (SEMA5B) of Homo sapiens (Human).